Here is a 237-residue protein sequence, read N- to C-terminus: MTNELLYEGKAKRLFKTDEAGVLRVAYKDDATALNGVRKESFAGKGELNNQITSLIFSYLAKEGISSHFIRAISETEQLVKEVSIIPLEVVVRNVMAGSLAKRLGKEEGEEIPNAIVEFYYKDDALDDPFINDDHVLYLDIATTNEMDTIRQAARSINKVLQELFNQMNITLIDFKLEFGRDAAGNILLADEISPDTCRLWDKETNQKLDKDVFRRNIGNLTDVYTEVLNRLKQVQN.

This sequence belongs to the SAICAR synthetase family.

The enzyme catalyses 5-amino-1-(5-phospho-D-ribosyl)imidazole-4-carboxylate + L-aspartate + ATP = (2S)-2-[5-amino-1-(5-phospho-beta-D-ribosyl)imidazole-4-carboxamido]succinate + ADP + phosphate + 2 H(+). Its pathway is purine metabolism; IMP biosynthesis via de novo pathway; 5-amino-1-(5-phospho-D-ribosyl)imidazole-4-carboxamide from 5-amino-1-(5-phospho-D-ribosyl)imidazole-4-carboxylate: step 1/2. The chain is Phosphoribosylaminoimidazole-succinocarboxamide synthase from Listeria innocua serovar 6a (strain ATCC BAA-680 / CLIP 11262).